Reading from the N-terminus, the 1862-residue chain is Transient receptor potential cation channel subfamily M member 7 (1862 aa).

Methionine 1 carries the N-acetylmethionine modification. The Cytoplasmic segment spans residues 1 to 850 (MSQKSWIEST…ITRKFYAFYH (850 aa)). Serine 101 is subject to Phosphoserine. A compositionally biased stretch (low complexity) spans 544–554 (NRRSGRNASSS). The disordered stretch occupies residues 544–574 (NRRSGRNASSSTPQLRKSHETFGNRADKKEK). A compositionally biased stretch (basic and acidic residues) spans 560–573 (KSHETFGNRADKKE). Residues 851-876 (APIVKFWFNTLAYLGFLMLYTFVVLV) traverse the membrane as a helical segment. Residues 877 to 882 (QMEQLP) are Extracellular-facing. A helical transmembrane segment spans residues 883-904 (SVQEWIVIAYIFTYAIEKIREV). Topologically, residues 905–923 (FMSEAGKISQKIKVWFSDY) are cytoplasmic. A helical membrane pass occupies residues 924–943 (FNVSDTIAIISFFVGFGLRF). The Extracellular portion of the chain corresponds to 944-956 (GAKWNYINAYDNH). Residues 957 to 980 (VFVAGRLIYCLNIIFWYVRLLDFL) traverse the membrane as a helical segment. At 981–999 (AVNQQAGPYVMMIGKMVAN) the chain is on the cytoplasmic side. A helical transmembrane segment spans residues 1000–1023 (MFYIVVIMALVLLSFGVPRKAILY). Residues 1024-1025 (PH) lie on the Extracellular side of the membrane. An intramembrane region (pore-forming) is located at residues 1026–1066 (EEPSWSLAKDIVFHPYWMIFGEVYAYEIDVCANDSALPTIC). Residues 1067–1069 (GPG) lie on the Extracellular side of the membrane. A helical transmembrane segment spans residues 1070–1098 (TWLTPFLQAVYLFVQYIIMVNLLIAFFNN). The Cytoplasmic segment spans residues 1099–1862 (VYLQVKAISN…EATNSVRLML (764 aa)). Residues cysteine 1143, cysteine 1144, and cysteine 1146 are each lipidated (S-palmitoyl cysteine). Threonine 1163 is subject to Phosphothreonine. Serine 1191, serine 1193, serine 1224, serine 1255, and serine 1258 each carry phosphoserine. A coiled-coil region spans residues 1198 to 1250 (RVTFERVEQMSIQIKEVGDRVNYIKRSLQSLDSQIGHLQDLSALTVDTLKTLT). Threonine 1265 carries the post-translational modification Phosphothreonine. Phosphoserine is present on residues serine 1300, serine 1357, serine 1360, serine 1385, serine 1386, serine 1389, serine 1394, serine 1395, and serine 1403. The tract at residues 1380 to 1418 (NQKLGSSPNSSPHMSSPPTKFSVSTPSQPSCKSHLESTT) is disordered. Over residues 1385-1397 (SSPNSSPHMSSPP) the composition is skewed to low complexity. Over residues 1398–1410 (TKFSVSTPSQPSC) the composition is skewed to polar residues. Residue threonine 1404 is modified to Phosphothreonine. A phosphoserine mark is found at serine 1406 and serine 1445. At threonine 1454 the chain carries Phosphothreonine. The residue at position 1455 (serine 1455) is a Phosphoserine. 2 positions are modified to phosphothreonine: threonine 1466 and threonine 1470. Residues 1485–1511 (TPTSLHSEQESCSRRASTEDSPDVDSR) are disordered. Phosphoserine is present on residues serine 1491, serine 1497, serine 1501, serine 1510, and serine 1530. The segment covering 1491–1502 (SEQESCSRRAST) has biased composition (basic and acidic residues). The residue at position 1534 (threonine 1534) is a Phosphothreonine. Serine 1540 is modified (phosphoserine). Threonine 1548 carries the post-translational modification Phosphothreonine. Residues serine 1564 and serine 1566 each carry the phosphoserine modification. At threonine 1580 the chain carries Phosphothreonine. The Alpha-type protein kinase domain maps to 1591–1821 (ILNNSMSSWS…CCRKLKLPDL (231 aa)). Phosphoserine occurs at positions 1595 and 1612. Glycine 1618, glycine 1619, leucine 1620, arginine 1621, and lysine 1645 together coordinate ADP. Serine 1657 carries the post-translational modification Phosphoserine. The residue at position 1682 (threonine 1682) is a Phosphothreonine. ADP-binding residues include glutamate 1717, glutamate 1718, and methionine 1720. Histidine 1750 provides a ligand contact to Zn(2+). Aspartate 1764 functions as the Proton acceptor in the catalytic mechanism. Residue aspartate 1774 participates in ADP binding. A Phosphoserine modification is found at serine 1776. Residues histidine 1807, cysteine 1809, and cysteine 1813 each contribute to the Zn(2+) site. At threonine 1827 the chain carries Phosphothreonine. The interval 1840–1862 (DLNLQAGNSTKESEATNSVRLML) is disordered. A phosphoserine mark is found at serine 1848 and serine 1857.

In the C-terminal section; belongs to the protein kinase superfamily. Alpha-type protein kinase family. ALPK subfamily. The protein in the N-terminal section; belongs to the transient receptor (TC 1.A.4) family. LTrpC subfamily. TRPM7 sub-subfamily. As to quaternary structure, homodimer. Homotetramer. Forms heteromers with TRPM6; heteromeric channels are functionally different from the homomeric channels. Interacts with PLCB1. Zn(2+) is required as a cofactor. In terms of processing, palmitoylated; palmitoylation at Cys-1143, Cys-1144 and Cys-1146 promotes TRPM7 trafficking from the Golgi to the surface membrane. Post-translationally, autophosphorylated; autophosphorylation regulates TRPM7 kinase activity towards its substrates. The C-terminal kinase domain can be cleaved from the channel segment in a cell-type-specific fashion. TRPM7 is cleaved by caspase-8, dissociating the kinase from the ion-conducting pore. The cleaved kinase fragments (M7CKs) can translocate to the cell nucleus and binds chromatin-remodeling complex proteins in a Zn(2+)-dependent manner to ultimately phosphorylate specific Ser/Thr residues of histones.

The protein resides in the cell membrane. Its subcellular location is the cytoplasmic vesicle membrane. The protein localises to the nucleus. The enzyme catalyses L-seryl-[protein] + ATP = O-phospho-L-seryl-[protein] + ADP + H(+). The catalysed reaction is L-threonyl-[protein] + ATP = O-phospho-L-threonyl-[protein] + ADP + H(+). It catalyses the reaction Mg(2+)(in) = Mg(2+)(out). It carries out the reaction Ca(2+)(in) = Ca(2+)(out). The enzyme catalyses Zn(2+)(in) = Zn(2+)(out). Its activity is regulated as follows. Channel displays constitutive activity. Channel activity is negatively regulated by cytosolic Mg(2+), Mg-ATP, low intracellular pH. Resting free cytosolic Mg(2+) and Mg-ATP concentrations seem to be sufficient to block native TRPM7 channel activity. TRPM7 channel activity is highly dependent on membrane levels of phosphatidylinositol 4,5 bisphosphate (PIP2). PIP2 hydrolysis negatively regulates TRPM7 channel activity. TRPM7 kinase activity does not affect channel activity. The kinase activity is controlled through the autophosphorylation of a serine/threonine-rich region located N-terminal to the catalytic domain. In terms of biological role, bifunctional protein that combines an ion channel with an intrinsic kinase domain, enabling it to modulate cellular functions either by conducting ions through the pore or by phosphorylating downstream proteins via its kinase domain. The channel is highly permeable to divalent cations, specifically calcium (Ca2+), magnesium (Mg2+) and zinc (Zn2+) and mediates their influx. Controls a wide range of biological processes such as Ca2(+), Mg(2+) and Zn(2+) homeostasis, vesicular Zn(2+) release channel and intracellular Ca(2+) signaling, embryonic development, immune responses, cell motility, proliferation and differentiation. The C-terminal alpha-kinase domain autophosphorylates cytoplasmic residues of TRPM7. TRPM7 phosphorylates SMAD2, suggesting that TRPM7 kinase may play a role in activating SMAD signaling pathways. In vitro, TRPM7 kinase phosphorylates ANXA1 (annexin A1), myosin II isoforms and a variety of proteins with diverse cellular functions. Functionally, the cleaved channel exhibits substantially higher current and potentiates Fas receptor signaling. Its function is as follows. The C-terminal kinase domain can be cleaved from the channel segment in a cell-type-specific fashion. In immune cells, the TRPM7 kinase domain is clipped from the channel domain by caspases in response to Fas-receptor stimulation. The cleaved kinase fragments can translocate to the nucleus, and bind chromatin-remodeling complex proteins in a Zn(2+)-dependent manner to ultimately phosphorylate specific Ser/Thr residues of histones known to be functionally important for cell differentiation and embryonic development. This is Transient receptor potential cation channel subfamily M member 7 from Rattus norvegicus (Rat).